We begin with the raw amino-acid sequence, 344 residues long: Pre-mRNA-splicing factor cwc-21 (344 aa).

Residues 1–19 are compositionally biased toward polar residues; the sequence is MSDNVGLSTPRGSGTSGYV. 2 disordered regions span residues 1 to 58 and 98 to 344; these read MSDN…LEHD and EMER…DNRD. Positions 38-58 are enriched in basic and acidic residues; that stretch reads KDFDSLKHQPRQPDKGLLEHD. The region spanning 55–98 is the CWF21 domain; it reads LEHDRKREVEVKVFELRDKLEEEGVEEDEIETRCDELRRKLLAE. Residues 69 to 105 adopt a coiled-coil conformation; it reads ELRDKLEEEGVEEDEIETRCDELRRKLLAEMERNQNS. Basic and acidic residues-rich tracts occupy residues 120 to 167, 188 to 226, and 238 to 277; these read QVHE…REAN, RGGDRDRGRGRGFGRRDRDEGRLNSRERRAPPRDWDRPP, and GGRDREVDSYRGAAGRDRSRSRSPIRERSRTRSPVRDTGR. A compositionally biased stretch (basic residues) spans 288–306; the sequence is SRSRSRSRSYSRSRSPPRR. 2 stretches are compositionally biased toward basic and acidic residues: residues 307–316 and 327–344; these read RAADSQDRSL and SPDRDRYREKYRDRDNRD.

The protein belongs to the CWC21 family. Associates with the NTC complex (or PRP19-associated complex). The NTC complex associates with the spliceosome after the release of the U1 and U4 snRNAs and forms the CWC spliceosome subcomplex reminiscent of a late-stage spliceosome.

Its subcellular location is the cytoplasm. It localises to the nucleus. Its function is as follows. Involved in pre-mRNA splicing. May function at or prior to the first catalytic step of splicing at the catalytic center of the spliceosome. May do so by stabilizing the catalytic center or the position of the RNA substrate. The polypeptide is Pre-mRNA-splicing factor cwc-21 (cwc-21) (Neurospora crassa (strain ATCC 24698 / 74-OR23-1A / CBS 708.71 / DSM 1257 / FGSC 987)).